A 397-amino-acid polypeptide reads, in one-letter code: Acetyl-CoA acetyltransferase, cytosolic (397 aa).

N-acetylmethionine is present on Met-1. Residue Cys-92 is the Acyl-thioester intermediate of the active site. Residue Lys-200 is modified to N6-acetyllysine. Positions 223 and 226 each coordinate CoA. Residues Lys-233 and Lys-235 each carry the N6-acetyllysine modification. Residue Ser-252 coordinates CoA. The Proton donor/acceptor role is filled by Cys-383.

The protein belongs to the thiolase-like superfamily. Thiolase family. In terms of assembly, homotetramer.

Its subcellular location is the cytoplasm. It is found in the cytosol. It catalyses the reaction 2 acetyl-CoA = acetoacetyl-CoA + CoA. The protein operates within lipid metabolism; fatty acid metabolism. In terms of biological role, involved in the biosynthetic pathway of cholesterol. The chain is Acetyl-CoA acetyltransferase, cytosolic (Acat2) from Mus musculus (Mouse).